Reading from the N-terminus, the 824-residue chain is Putative beta-glucuronidase (824 aa).

A helical transmembrane segment spans residues 26-43; the sequence is YLKLVLVLYLIMVSWSGY. Catalysis depends on glutamate 430, which acts as the Proton donor.

Belongs to the glycosyl hydrolase 2 family.

Its subcellular location is the membrane. It carries out the reaction a beta-D-glucuronoside + H2O = D-glucuronate + an alcohol. Its function is as follows. Glycoside hydrolase that may be involved in ulvan degradation. Ulvan is the main polysaccharide component of the Ulvales (green seaweed) cell wall. It is composed of disaccharide building blocks comprising 3-sulfated rhamnose (Rha3S) linked to D-glucuronic acid (GlcA), L-iduronic acid (IduA), or D-xylose (Xyl). This is Putative beta-glucuronidase from Formosa agariphila (strain DSM 15362 / KCTC 12365 / LMG 23005 / KMM 3901 / M-2Alg 35-1).